Consider the following 291-residue polypeptide: Homeobox protein SIX2 (291 aa).

The homeobox DNA-binding region spans 124-183 (GEETSYCFKEKSRSVLREWYAHNPYPSPREKRELAEATGLTTTQVSNWFKNRRQRDRAAE). The segment at 168 to 279 (VSNWFKNRRQ…HHHGLQDSIL (112 aa)) is disordered. A compositionally biased stretch (basic and acidic residues) spans 179–190 (DRAAEAKERENN). Over residues 224-233 (HSSSSPALLL) the composition is skewed to low complexity. Over residues 249–259 (PPGPSAVPVPV) the composition is skewed to pro residues.

The protein belongs to the SIX/Sine oculis homeobox family. Interacts with TCF7L2; in a canonical Wnt signaling independent manner; prevents transcription of differentiation genes in cap mesenchyme. Interacts with OSR1; form a strong repressor complex with TCF7L2, TLE2 and TLE3 to prevent the activation of Wnt/beta-catenin target genes in the cap mesenchyme. Interacts with HOXA11, EYA1 and EYA3. In terms of tissue distribution, strongly expressed in skeletal muscle. Expressed in Wilms' tumor and in the cap mesenchyme of fetal kidney (at protein level).

It localises to the nucleus. Transcription factor that plays an important role in the development of several organs, including kidney, skull and stomach. During kidney development, maintains cap mesenchyme multipotent nephron progenitor cells in an undifferentiated state by opposing the inductive signals emanating from the ureteric bud and cooperates with WNT9B to promote renewing progenitor cells proliferation. Acts through its interaction with TCF7L2 and OSR1 in a canonical Wnt signaling independent manner preventing transcription of differentiation genes in cap mesenchyme such as WNT4. Also acts independently of OSR1 to activate expression of many cap mesenchyme genes, including itself, GDNF and OSR1. During craniofacial development plays a role in growth and elongation of the cranial base through regulation of chondrocyte differentiation. During stomach organogenesis, controls pyloric sphincter formation and mucosal growth through regulation of a gene network including NKX2-5, BMPR1B, BMP4, SOX9 and GREM1. During branchial arch development, acts to mediate HOXA2 control over the insulin-like growth factor pathway. May also be involved in limb tendon and ligament development. Plays a role in cell proliferation and migration. The polypeptide is Homeobox protein SIX2 (SIX2) (Homo sapiens (Human)).